A 258-amino-acid polypeptide reads, in one-letter code: L-aspartate dehydrogenase 1 (258 aa).

2 residues coordinate NAD(+): alanine 121 and asparagine 181. Histidine 211 is a catalytic residue.

It belongs to the L-aspartate dehydrogenase family.

The enzyme catalyses L-aspartate + NADP(+) + H2O = oxaloacetate + NH4(+) + NADPH + H(+). It carries out the reaction L-aspartate + NAD(+) + H2O = oxaloacetate + NH4(+) + NADH + H(+). Its pathway is cofactor biosynthesis; NAD(+) biosynthesis; iminoaspartate from L-aspartate (dehydrogenase route): step 1/1. In terms of biological role, specifically catalyzes the NAD or NADP-dependent dehydrogenation of L-aspartate to iminoaspartate. In Bordetella parapertussis (strain 12822 / ATCC BAA-587 / NCTC 13253), this protein is L-aspartate dehydrogenase 1.